Consider the following 555-residue polypeptide: Formate--tetrahydrofolate ligase (555 aa).

65-72 contributes to the ATP binding site; it reads TPAGEGKS.

The protein belongs to the formate--tetrahydrofolate ligase family.

It catalyses the reaction (6S)-5,6,7,8-tetrahydrofolate + formate + ATP = (6R)-10-formyltetrahydrofolate + ADP + phosphate. It participates in one-carbon metabolism; tetrahydrofolate interconversion. This chain is Formate--tetrahydrofolate ligase, found in Staphylococcus carnosus (strain TM300).